The following is a 104-amino-acid chain: Nucleoid-associated protein Bsph_0039 (104 aa).

The segment covering 1–12 (MRGMGNMQGMMK) has biased composition (low complexity). Residues 1–22 (MRGMGNMQGMMKKMQKMQKEMM) form a disordered region.

It belongs to the YbaB/EbfC family. As to quaternary structure, homodimer.

The protein resides in the cytoplasm. The protein localises to the nucleoid. Binds to DNA and alters its conformation. May be involved in regulation of gene expression, nucleoid organization and DNA protection. This chain is Nucleoid-associated protein Bsph_0039, found in Lysinibacillus sphaericus (strain C3-41).